The sequence spans 338 residues: Taste receptor type 2 member 39 (338 aa).

Residues methionine 1–serine 30 lie on the Extracellular side of the membrane. A helical transmembrane segment spans residues proline 31–alanine 51. At asparagine 52–arginine 74 the chain is on the cytoplasmic side. The helical transmembrane segment at isoleucine 75–threonine 95 threads the bilayer. The Extracellular portion of the chain corresponds to isoleucine 96–serine 116. A helical membrane pass occupies residues phenylalanine 117–valine 137. The Cytoplasmic segment spans residues lysine 138–glycine 156. A helical membrane pass occupies residues leucine 157–isoleucine 177. Topologically, residues asparagine 178–serine 205 are extracellular. Residue asparagine 194 is glycosylated (N-linked (GlcNAc...) asparagine). A helical membrane pass occupies residues valine 206–leucine 226. Topologically, residues alanine 227 to lysine 262 are cytoplasmic. A helical membrane pass occupies residues alanine 263–serine 283. Residues asparagine 284–leucine 291 lie on the Extracellular side of the membrane. Residues tryptophan 292–isoleucine 312 traverse the membrane as a helical segment. At lysine 313 to leucine 338 the chain is on the cytoplasmic side.

This sequence belongs to the G-protein coupled receptor T2R family.

The protein resides in the membrane. In terms of biological role, receptor that may play a role in the perception of bitterness and is gustducin-linked. May play a role in sensing the chemical composition of the gastrointestinal content. The activity of this receptor may stimulate alpha gustducin, mediate PLC-beta-2 activation and lead to the gating of TRPM5. The protein is Taste receptor type 2 member 39 (TAS2R39) of Macaca mulatta (Rhesus macaque).